The chain runs to 361 residues: Spermidine/putrescine import ATP-binding protein PotA (361 aa).

Residues 4–234 (LEIKNVVKRF…PKNRFVADFL (231 aa)) form the ABC transporter domain. 36 to 43 (GPSGCGKT) provides a ligand contact to ATP.

This sequence belongs to the ABC transporter superfamily. Spermidine/putrescine importer (TC 3.A.1.11.1) family. The complex is composed of two ATP-binding proteins (PotA), two transmembrane proteins (PotB and PotC) and a solute-binding protein (PotD).

Its subcellular location is the cell inner membrane. It carries out the reaction ATP + H2O + polyamine-[polyamine-binding protein]Side 1 = ADP + phosphate + polyamineSide 2 + [polyamine-binding protein]Side 1.. Functionally, part of the ABC transporter complex PotABCD involved in spermidine/putrescine import. Responsible for energy coupling to the transport system. The protein is Spermidine/putrescine import ATP-binding protein PotA of Chromobacterium violaceum (strain ATCC 12472 / DSM 30191 / JCM 1249 / CCUG 213 / NBRC 12614 / NCIMB 9131 / NCTC 9757 / MK).